The primary structure comprises 78 residues: Putative antitoxin PF1222 (78 aa).

The protein belongs to the UPF0330 family.

Its function is as follows. Possibly the antitoxin component of a type II toxin-antitoxin (TA) system. In Pyrococcus furiosus (strain ATCC 43587 / DSM 3638 / JCM 8422 / Vc1), this protein is Putative antitoxin PF1222.